The sequence spans 601 residues: MTTRTIDNIRNFSIVAHIDHGKSTLADRLIQQTGTVALRDMSEQMLDSMDIERERGITIKANTVRLEYKAEDGQDYVLNLMDTPGHVDFAYEVSRSLAACEGSLLVVDASQGVEAQTLANVYQALDANHEIVPVLNKVDLPAAEPDRVKEQIEEVIGLDASEAVPISAKTGLNIEAVLEAIVKRLPPPKGDREAPLKALLVDSWYDVYLGVVVLVRIVDGVLKKGMTIRMMGADAAYGVDRIGVFRPKMADIGELGPGEVGFFTGSIKEVADTRVGDTITEDKRQTTQMLPGFKEVQAVVFCGLFPVDAADFENLRGAMGKLRLNDASFSYEMETSAALGFGFRCGFLGLLHLEIIQERLEREFNLDLISTAPSVVYRLMMRDGELKELHNPADMPDPMKIETVEEPWIRATILTPDDYLGGVLKLCQDRRGIQIDLNYVGKRAMVVYDLPLNEVVFDFYDRLKSISKGYASFDYHVSDYREGDLVKMSILVNAEPVDALSMLVHRTRAESRGRAMCEKLKDLIPRHLFQIPVQAAIGGKIIARETIRALSKDVTAKCYGGDISRKRKLLDKQKEGKKRMRQFGRVEIPQEAFIAALKMDD.

Positions 7–189 (DNIRNFSIVA…AIVKRLPPPK (183 aa)) constitute a tr-type G domain. GTP-binding positions include 19–24 (DHGKST) and 136–139 (NKVD).

Belongs to the TRAFAC class translation factor GTPase superfamily. Classic translation factor GTPase family. LepA subfamily.

It localises to the cell inner membrane. The catalysed reaction is GTP + H2O = GDP + phosphate + H(+). In terms of biological role, required for accurate and efficient protein synthesis under certain stress conditions. May act as a fidelity factor of the translation reaction, by catalyzing a one-codon backward translocation of tRNAs on improperly translocated ribosomes. Back-translocation proceeds from a post-translocation (POST) complex to a pre-translocation (PRE) complex, thus giving elongation factor G a second chance to translocate the tRNAs correctly. Binds to ribosomes in a GTP-dependent manner. The chain is Elongation factor 4 from Methylorubrum populi (strain ATCC BAA-705 / NCIMB 13946 / BJ001) (Methylobacterium populi).